Consider the following 235-residue polypeptide: Cobalt transport protein CbiM (235 aa).

Helical transmembrane passes span 6-26, 43-63, 85-105, 108-128, 133-153, and 181-201; these read GVLP…FVVH, LLLA…LPSV, MAFM…HGGI, LGAN…GAYV, LGGP…LSTY, and IFAI…ILLF.

The protein belongs to the CbiM family. As to quaternary structure, forms an energy-coupling factor (ECF) transporter complex composed of an ATP-binding protein (A component, CbiO), a transmembrane protein (T component, CbiQ) and 2 possible substrate-capture proteins (S components, CbiM and CbiN) of unknown stoichimetry.

Its subcellular location is the cell membrane. It participates in cofactor biosynthesis; adenosylcobalamin biosynthesis. In terms of biological role, part of the energy-coupling factor (ECF) transporter complex CbiMNOQ involved in cobalt import. The protein is Cobalt transport protein CbiM of Propionibacterium freudenreichii subsp. shermanii (strain ATCC 9614 / DSM 4902 / CIP 103027 / NCIMB 8099 / CIRM-BIA1).